Reading from the N-terminus, the 453-residue chain is MTTDTIVAQATAPGRGGVGIIRVSGPQAAQVALEVTGKTLKARYAEYLPFKAQDGSELDQGIALFFPNPHSFTGEDVLELQGHGGPVVMDMLIKRILTISGVRPARPGEFSERAFLNDKMDLTQAEAIADLIDASSEEAAKSALQSLQGQFSKRIHTLVESLIHLRIYVEAAIDFPEEEIDFLADGKVAGDLQAIIDNLDAVRKEANQGAIMREGMKVVIAGRPNAGKSSLLNALSGKDSAIVTDIAGTTRDVLREHIHIDGMPLHIIDTAGLRDASDEVEKIGIERAWDEIRQADRVLFMVDGTTTDATDPKEIWPDFIDRLPEQIGITVIRNKADQTQESLGICHVSQPTLIRLSAKTGQGVDALRNHLKECMGFSGNSEGGFMARRRHLDALQRAAEHLLIGQEQLEGYMAGEILAEELRIAQQHLNEITGEFSSDDLLGRIFSSFCIGK.

(6S)-5-formyl-5,6,7,8-tetrahydrofolate-binding residues include Arg22, Glu79, and Lys119. In terms of domain architecture, TrmE-type G spans 215 to 376; that stretch reads GMKVVIAGRP…LRNHLKECMG (162 aa). Asn225 lines the K(+) pocket. Residues 225–230, 244–250, 269–272, and 334–337 contribute to the GTP site; these read NAGKSS, TDIAGTT, DTAG, and NKAD. Residue Ser229 participates in Mg(2+) binding. Residues Thr244, Ile246, and Thr249 each contribute to the K(+) site. Thr250 serves as a coordination point for Mg(2+). Residue Lys453 coordinates (6S)-5-formyl-5,6,7,8-tetrahydrofolate.

This sequence belongs to the TRAFAC class TrmE-Era-EngA-EngB-Septin-like GTPase superfamily. TrmE GTPase family. As to quaternary structure, homodimer. Heterotetramer of two MnmE and two MnmG subunits. K(+) is required as a cofactor.

It is found in the cytoplasm. Exhibits a very high intrinsic GTPase hydrolysis rate. Involved in the addition of a carboxymethylaminomethyl (cmnm) group at the wobble position (U34) of certain tRNAs, forming tRNA-cmnm(5)s(2)U34. The protein is tRNA modification GTPase MnmE of Vibrio vulnificus (strain CMCP6).